Here is a 437-residue protein sequence, read N- to C-terminus: Adenylosuccinate synthetase (437 aa).

Residues 12–18 (GDEGKGK) and 40–42 (GHT) contribute to the GTP site. Asp-13 functions as the Proton acceptor in the catalytic mechanism. Mg(2+) is bound by residues Asp-13 and Gly-40. Residues 13–16 (DEGK), 38–41 (NAGH), Thr-128, Arg-142, Gln-223, Thr-238, and Arg-302 contribute to the IMP site. His-41 serves as the catalytic Proton donor. 298-304 (TTTGRRR) serves as a coordination point for substrate. GTP contacts are provided by residues Arg-304, 330 to 332 (KLD), and 412 to 414 (SLG).

This sequence belongs to the adenylosuccinate synthetase family. In terms of assembly, homodimer. It depends on Mg(2+) as a cofactor.

It localises to the cytoplasm. It carries out the reaction IMP + L-aspartate + GTP = N(6)-(1,2-dicarboxyethyl)-AMP + GDP + phosphate + 2 H(+). It participates in purine metabolism; AMP biosynthesis via de novo pathway; AMP from IMP: step 1/2. Plays an important role in the de novo pathway of purine nucleotide biosynthesis. Catalyzes the first committed step in the biosynthesis of AMP from IMP. The sequence is that of Adenylosuccinate synthetase from Prochlorococcus marinus (strain NATL1A).